Reading from the N-terminus, the 108-residue chain is Circadian clock oscillator protein KaiB (108 aa).

The protein belongs to the KaiB family. May undergo a major conformational rearrangment; in the free state forms homooligomers. When bound to KaiC switches to a monomeric thioredoxin-fold (KaiB(fs)). The active oscillator complex is probably KaiC(6):KaiB(6).

In terms of biological role, component of the KaiBC clock protein complex, which constitutes the main circadian regulator in cyanobacteria; it may modify the ATPase activity of KaiC. Its function is as follows. May be a metamorphic protein which reversibly switches between an inactive tetrameric fold and a rare, thioredoxin-like monomeric fold (KaiB(fs)). KaiB(fs) binds phospho-KaiC, and perhaps clock output effectors. This chain is Circadian clock oscillator protein KaiB, found in Prochlorococcus marinus (strain MIT 9515).